The sequence spans 385 residues: Probable protein phosphatase 2C 79 (385 aa).

The first 18 residues, 1-18 (MLSLFFNFLTSCLWPSSS), serve as a signal peptide directing secretion. Residues 47–356 (DFSMAVVQAN…DDITVVVLFL (310 aa)) form the PPM-type phosphatase domain. At serine 76 the chain carries Phosphoserine. Positions 87, 88, 288, and 347 each coordinate Mn(2+).

It belongs to the PP2C family. It depends on Mg(2+) as a cofactor. Mn(2+) serves as cofactor.

The enzyme catalyses O-phospho-L-seryl-[protein] + H2O = L-seryl-[protein] + phosphate. It catalyses the reaction O-phospho-L-threonyl-[protein] + H2O = L-threonyl-[protein] + phosphate. May dephosphorylate and repress plasma membrane H(+)-ATPases (PM H(+)-ATPases, e.g. AHA1 and AHA2), thus influencing negatively plant growth and fitness. This Arabidopsis thaliana (Mouse-ear cress) protein is Probable protein phosphatase 2C 79.